The sequence spans 364 residues: BOLA class I histocompatibility antigen, alpha chain BL3-7 (364 aa).

The first 27 residues, 1 to 27, serve as a signal peptide directing secretion; sequence MRVMRVMRPRTLLLLLSGVLVLTETLA. The segment at 28–117 is alpha-1; the sequence is GSHSLRYFYT…LRGYYNQSET (90 aa). Over 28 to 310 the chain is Extracellular; sequence GSHSLRYFYT…WEPPQTSFLI (283 aa). Asparagine 113 is a glycosylation site (N-linked (GlcNAc...) asparagine). Positions 118–209 are alpha-2; that stretch reads GSHNIQAMYG…ENGKDTLLRA (92 aa). Disulfide bonds link cysteine 128–cysteine 191 and cysteine 230–cysteine 286. The segment at 210 to 301 is alpha-3; it reads DPPKAHVTHH…GLQEPLTLRW (92 aa). In terms of domain architecture, Ig-like C1-type spans 212–298; sequence PKAHVTHHSI…QHEGLQEPLT (87 aa). The segment at 302–310 is connecting peptide; sequence EPPQTSFLI. Residues 311–331 traverse the membrane as a helical segment; the sequence is MGIIVGLVLLVVALVAGAVIW. The Cytoplasmic portion of the chain corresponds to 332–364; sequence RKKRSGEKGRIYTQAASSDSAQGSDVSLTVPKV. Phosphoserine is present on residues serine 355 and serine 358.

This sequence belongs to the MHC class I family. Heterodimer of an alpha chain and a beta chain (beta-2-microglobulin).

It is found in the membrane. Functionally, involved in the presentation of foreign antigens to the immune system. The protein is BOLA class I histocompatibility antigen, alpha chain BL3-7 of Bos taurus (Bovine).